Here is a 179-residue protein sequence, read N- to C-terminus: NADH-quinone oxidoreductase subunit B (179 aa).

Cys53, Cys54, Cys118, and Cys148 together coordinate [4Fe-4S] cluster.

This sequence belongs to the complex I 20 kDa subunit family. In terms of assembly, NDH-1 is composed of 14 different subunits. Subunits NuoB, C, D, E, F, and G constitute the peripheral sector of the complex. It depends on [4Fe-4S] cluster as a cofactor.

The protein resides in the cell membrane. It carries out the reaction a quinone + NADH + 5 H(+)(in) = a quinol + NAD(+) + 4 H(+)(out). NDH-1 shuttles electrons from NADH, via FMN and iron-sulfur (Fe-S) centers, to quinones in the respiratory chain. The immediate electron acceptor for the enzyme in this species is believed to be a menaquinone. Couples the redox reaction to proton translocation (for every two electrons transferred, four hydrogen ions are translocated across the cytoplasmic membrane), and thus conserves the redox energy in a proton gradient. In Bacillus thuringiensis (strain Al Hakam), this protein is NADH-quinone oxidoreductase subunit B.